The primary structure comprises 4965 residues: Auxin transport protein BIG (4965 aa).

A run of 3 helical transmembrane segments spans residues 289 to 309 (SDIC…IFSP), 646 to 666 (ACLA…AYEV), and 772 to 792 (LFLI…YEGL). The disordered stretch occupies residues 1383 to 1425 (TNQESNSTVDCDASSGEEDEDDGTSDGELVSIDRDEEEDGNSE). Over residues 1397-1407 (SGEEDEDDGTS) the composition is skewed to acidic residues. The UBR-type zinc-finger motif lies at 1431–1502 (KVCTFTSSGS…RGSSCQCLKP (72 aa)). A disordered region spans residues 2437–2456 (DDAPDNHAKASAASNSTTGN). A compositionally biased stretch (low complexity) spans 2445-2456 (KASAASNSTTGN). The segment at 2469 to 2528 (SVQYCCDGCSTVPILRRRWHCNICPDFDLCETCYEILDADRLPAPHSRDHPMSAIPIELD) adopts a ZZ-type zinc-finger fold. Zn(2+)-binding residues include Cys-2474, Cys-2477, Cys-2489, Cys-2492, Cys-2498, Cys-2501, His-2514, and His-2518. Residues 2997–3037 (NAQKTESGDIGSSTRTGSQSSDSKKKRKGDDSSEGSSEKSC) form a disordered region. Low complexity predominate over residues 3007-3017 (GSSTRTGSQSS). The segment covering 3024–3037 (KGDDSSEGSSEKSC) has biased composition (basic and acidic residues). An MYND-type; degenerate zinc finger spans residues 3319–3359 (CPRCSRSVTDKHGICSNCHENAYQCRQCRNINYENLDSFLC). A disordered region spans residues 3672–3721 (PKSDSGEKEPGMGKSSLMQAKNDDTVGHSVTNLSTSKTQSELSGKIPDGS). Polar residues predominate over residues 3699–3713 (HSVTNLSTSKTQSEL). The UBR4 E3 catalytic module stretch occupies residues 4433-4963 (PSIPLILSML…DFVRAIIHGA (531 aa)). Residues 4562–4681 (GLACMVCREG…WDQLNSLGRA (120 aa)) form a HemiRING-type zinc finger. Residues Cys-4565, Cys-4568, His-4615, and Cys-4618 each coordinate Zn(2+). One can recognise a UZI domain in the interval 4684–4963 (SRLRLLTYDI…DFVRAIIHGA (280 aa)). A compositionally biased stretch (low complexity) spans 4753 to 4770 (SSSPSTPESPVRLSALSG). 2 disordered regions span residues 4753–4778 (SSSP…SGSS) and 4822–4846 (STLK…ADSN). The span at 4824–4845 (LKLSADTSSSAVRSDEGSSADS) shows a compositional bias: polar residues.

It belongs to the UBR4 family.

It is found in the membrane. Functionally, required for auxin efflux and polar auxin transport (PAT) influencing auxin-mediated developmental responses (e.g. cell elongation, apical dominance, lateral root production, inflorescence architecture, general growth and development). In Oryza sativa subsp. japonica (Rice), this protein is Auxin transport protein BIG.